Reading from the N-terminus, the 510-residue chain is NAD(P)H-quinone oxidoreductase subunit 2, chloroplastic (510 aa).

11 helical membrane-spanning segments follow: residues 24-44 (LLLF…GLIL), 59-79 (WFYF…LFRW), 99-119 (IFQF…VEYI), 124-144 (MAIT…MFLC), 149-169 (LITI…LSGY), 183-203 (YLLM…WLYG), 295-315 (WHLL…LIAI), 323-343 (MLAY…IVGD), 347-367 (GYAS…GTFA), 395-415 (ALSS…AGFF), and 418-438 (LYLF…IGLL).

This sequence belongs to the complex I subunit 2 family. NDH is composed of at least 16 different subunits, 5 of which are encoded in the nucleus.

The protein localises to the plastid. Its subcellular location is the chloroplast thylakoid membrane. The enzyme catalyses a plastoquinone + NADH + (n+1) H(+)(in) = a plastoquinol + NAD(+) + n H(+)(out). It catalyses the reaction a plastoquinone + NADPH + (n+1) H(+)(in) = a plastoquinol + NADP(+) + n H(+)(out). NDH shuttles electrons from NAD(P)H:plastoquinone, via FMN and iron-sulfur (Fe-S) centers, to quinones in the photosynthetic chain and possibly in a chloroplast respiratory chain. The immediate electron acceptor for the enzyme in this species is believed to be plastoquinone. Couples the redox reaction to proton translocation, and thus conserves the redox energy in a proton gradient. This Asparagus officinalis (Garden asparagus) protein is NAD(P)H-quinone oxidoreductase subunit 2, chloroplastic.